Here is a 583-residue protein sequence, read N- to C-terminus: Putative ABC transporter ATP-binding protein exp8 (583 aa).

An ABC transmembrane type-1 domain is found at 25 to 308 (TFLALSFLLA…VTQNFSTLQT (284 aa)). The next 5 membrane-spanning stretches (helical) occupy residues 26 to 46 (FLAL…PLVA), 61 to 81 (AVTV…VQYV), 135 to 155 (MFSG…TTLY), 159 to 179 (VLDF…FLLV), and 259 to 279 (LGYA…GITV). Residues 341–574 (IRFEHVCFSY…GGTYHKMYSL (234 aa)) form the ABC transporter domain. Position 374 to 381 (374 to 381 (GHTGSGKS)) interacts with ATP.

It belongs to the ABC transporter superfamily.

Its subcellular location is the cell membrane. The protein is Putative ABC transporter ATP-binding protein exp8 (exp8) of Streptococcus pneumoniae serotype 4 (strain ATCC BAA-334 / TIGR4).